Reading from the N-terminus, the 334-residue chain is E3 ubiquitin-protein ligase CIP8 (334 aa).

Residues 111 to 158 (LNSRNEIDDDEDEDEDDGDEEEEDEEENLTVNDEEDEEDDLRRRNRFP) form a disordered region. The span at 117–149 (IDDDEDEDEDDGDEEEEDEEENLTVNDEEDEED) shows a compositional bias: acidic residues. The segment at 257-298 (CAVCKDGMVMGETGKKLPCGHCYHGDCIVPWLGTRNSCPVCR) adopts an RING-type; atypical zinc-finger fold. Positions 307–334 (EYEEERKKRTSTVSDSAAASSSSSTSRY) are disordered. A compositionally biased stretch (low complexity) spans 317-334 (STVSDSAAASSSSSTSRY).

In terms of assembly, interacts with the RING finger of COP1. Interacts with UBC8 through its N-terminal region. In terms of tissue distribution, expressed in both light- and dark-grown seedlings.

It localises to the cytoplasm. The catalysed reaction is S-ubiquitinyl-[E2 ubiquitin-conjugating enzyme]-L-cysteine + [acceptor protein]-L-lysine = [E2 ubiquitin-conjugating enzyme]-L-cysteine + N(6)-ubiquitinyl-[acceptor protein]-L-lysine.. The protein operates within protein modification; protein ubiquitination. In terms of biological role, E3 ubiquitin-protein ligase that mediates ubiquitination and subsequent proteasomal degradation of target proteins. Probably forms a minimal ubiquitin ligase complex in cooperation with the E2 enzyme UBC8. Its interaction with COP1 suggests that it may participate in proteasome-mediated degradation of HY5 in vivo. This is E3 ubiquitin-protein ligase CIP8 (CIP8) from Arabidopsis thaliana (Mouse-ear cress).